A 121-amino-acid polypeptide reads, in one-letter code: Basic phospholipase A2 homolog piratoxin-2 (121 aa).

Intrachain disulfides connect Cys-26-Cys-115, Cys-28-Cys-44, Cys-43-Cys-95, Cys-49-Cys-121, Cys-50-Cys-88, Cys-57-Cys-81, and Cys-75-Cys-86. The segment at 105–117 (KKYRYHLKPFCKK) is important for membrane-damaging activities in eukaryotes and bacteria; heparin-binding.

Belongs to the phospholipase A2 family. Group II subfamily. K49 sub-subfamily. Homodimer; non-covalently linked. In terms of tissue distribution, expressed by the venom gland.

It localises to the secreted. In terms of biological role, snake venom phospholipase A2 (PLA2) homolog that lacks enzymatic activity. Shows myotoxic activity and edema-inducing activities in vivo. A model of myotoxic mechanism has been proposed: an apo Lys49-PLA2 is activated by the entrance of a hydrophobic molecule (e.g. fatty acid) at the hydrophobic channel of the protein leading to a reorientation of a monomer. This reorientation causes a transition between 'inactive' to 'active' states, causing alignment of C-terminal and membrane-docking sites (MDoS) side-by-side and putting the membrane-disruption sites (MDiS) in the same plane, exposed to solvent and in a symmetric position for both monomers. The MDoS region stabilizes the toxin on membrane by the interaction of charged residues with phospholipid head groups. Subsequently, the MDiS region destabilizes the membrane with penetration of hydrophobic residues. This insertion causes a disorganization of the membrane, allowing an uncontrolled influx of ions (i.e. calcium and sodium), and eventually triggering irreversible intracellular alterations and cell death. The polypeptide is Basic phospholipase A2 homolog piratoxin-2 (Bothrops pirajai (Piraja's lancehead)).